Reading from the N-terminus, the 227-residue chain is 2,3-bisphosphoglycerate-dependent phosphoglycerate mutase (227 aa).

Substrate contacts are provided by residues 7–14 (RHGLSEWN), 20–21 (TG), Arg59, 86–89 (ERHY), Lys97, 113–114 (RR), and 182–183 (GN). His8 serves as the catalytic Tele-phosphohistidine intermediate. The Proton donor/acceptor role is filled by Glu86.

It belongs to the phosphoglycerate mutase family. BPG-dependent PGAM subfamily. Homodimer.

The catalysed reaction is (2R)-2-phosphoglycerate = (2R)-3-phosphoglycerate. The protein operates within carbohydrate degradation; glycolysis; pyruvate from D-glyceraldehyde 3-phosphate: step 3/5. In terms of biological role, catalyzes the interconversion of 2-phosphoglycerate and 3-phosphoglycerate. The chain is 2,3-bisphosphoglycerate-dependent phosphoglycerate mutase from Actinobacillus succinogenes (strain ATCC 55618 / DSM 22257 / CCUG 43843 / 130Z).